A 172-amino-acid chain; its full sequence is Signal peptidase complex catalytic subunit SEC11 (172 aa).

Residues 1 to 14 (MLSSLQNPRQAAAQ) are Cytoplasmic-facing. A helical; Signal-anchor for type II membrane protein transmembrane segment spans residues 15–35 (LMNFGLILSTAFMMWKGLSVI). Residues 36–172 (TDSPSPIVVV…MGLVVVLQRE (137 aa)) lie on the Lumenal side of the membrane. Active-site charge relay system residues include Ser49, His90, and Asp115. The C-terminal short (CTS) helix stretch occupies residues 158–169 (VMLGIMGLVVVL).

Belongs to the peptidase S26B family. As to quaternary structure, component of the signal peptidase complex (SPC) composed of a catalytic subunit SEC11 and three accessory subunits SPC1, SPC2 and SPC3. The complex induces a local thinning of the ER membrane which is used to measure the length of the signal peptide (SP) h-region of protein substrates. This ensures the selectivity of the complex towards h-regions shorter than 18-20 amino acids. SPC associates with the translocon complex.

The protein localises to the endoplasmic reticulum membrane. The enzyme catalyses Cleavage of hydrophobic, N-terminal signal or leader sequences from secreted and periplasmic proteins.. Functionally, catalytic component of the signal peptidase complex (SPC) which catalyzes the cleavage of N-terminal signal sequences from nascent proteins as they are translocated into the lumen of the endoplasmic reticulum. Specifically cleaves N-terminal signal peptides that contain a hydrophobic alpha-helix (h-region) shorter than 18-20 amino acids. This is Signal peptidase complex catalytic subunit SEC11 (SEC11) from Chaetomium globosum (strain ATCC 6205 / CBS 148.51 / DSM 1962 / NBRC 6347 / NRRL 1970) (Soil fungus).